Here is a 338-residue protein sequence, read N- to C-terminus: Glyceraldehyde-3-phosphate dehydrogenase (338 aa).

NAD(+)-binding positions include Arg12–Ile13, Asp38, and Ser125. D-glyceraldehyde 3-phosphate contacts are provided by residues Ser155–Thr157, Thr186, Thr216–Gly217, and Arg239. The Nucleophile role is filled by Cys156. Asn320 is an NAD(+) binding site.

This sequence belongs to the glyceraldehyde-3-phosphate dehydrogenase family. Homotetramer.

The protein resides in the cytoplasm. It catalyses the reaction D-glyceraldehyde 3-phosphate + phosphate + NAD(+) = (2R)-3-phospho-glyceroyl phosphate + NADH + H(+). Its pathway is carbohydrate degradation; glycolysis; pyruvate from D-glyceraldehyde 3-phosphate: step 1/5. Catalyzes the oxidative phosphorylation of glyceraldehyde 3-phosphate (G3P) to 1,3-bisphosphoglycerate (BPG) using the cofactor NAD. The first reaction step involves the formation of a hemiacetal intermediate between G3P and a cysteine residue, and this hemiacetal intermediate is then oxidized to a thioester, with concomitant reduction of NAD to NADH. The reduced NADH is then exchanged with the second NAD, and the thioester is attacked by a nucleophilic inorganic phosphate to produce BPG. This Lactobacillus delbrueckii subsp. bulgaricus protein is Glyceraldehyde-3-phosphate dehydrogenase (gap).